Reading from the N-terminus, the 208-residue chain is Ypt/Rab-type GTPase YPT7 (208 aa).

Residues 17-23, 33-40, Gly-67, and 126-129 contribute to the GTP site; these read SGVGKTS, YSQQYKAT, and NKID. An Effector region motif is present at residues 37 to 45; that stretch reads YKATIGADF. A Glycyl lysine isopeptide (Lys-Gly) (interchain with G-Cter in ubiquitin) cross-link involves residue Lys-147. 158-160 serves as a coordination point for GTP; sequence SAK. Residues Cys-206 and Cys-208 are each lipidated (S-geranylgeranyl cysteine). The residue at position 208 (Cys-208) is a Cysteine methyl ester.

The protein belongs to the small GTPase superfamily. Rab family. In terms of assembly, interacts with IVY1. Interacts with YIF1, YIP4 and YIP5. Interacts with the HOPS complex. Interacts with the class C-Vps complex. Interacts with VPS35. Interacts with VPS39. Interacts with the GDP dissociation inhibitor GDI1. Interacts with CCZ1.

It is found in the late endosome. Its subcellular location is the vacuole membrane. Its activity is regulated as follows. Rab activation is generally mediated by a guanine exchange factor (GEF), while inactivation through hydrolysis of bound GTP is catalyzed by a GTPase activating protein (GAP). YPT7 is activated by GEFs MON1-CCZ1 complex (MC1) and VAM6/VPS39, and inactivated by GAPs GYP7 and GYP1. Functionally, ypt/Rab-type GTPases are key regulators of membrane trafficking and intracellular vesicular transport. They act as molecular switches that convert between GTP-bound and GDP-bound states, and regulate virtually all steps of membrane traffic from the formation of the transport vesicle at the donor membrane to its fusion at the target membrane. In the GDP-bound state, Ypt proteins are predominantly cytosolic, solubilized through the interaction with a GDP dissociation inhibitor (GDI). In the GTP-bound state, the proteins are membrane bound and interact with specific effector proteins that select cargo, promote vesicle movement, or verify the correct site of fusion. Involved in regulation of vesicular protein transport in exo- and endocytosis. Involved in regulation of late endosome to vacuole trafficking and homotypic vacuole fusion, by interacting in its GTP-bound state on the donor membrane with the large multiprotein HOPS/class C-Vps tethering complex on the acceptor membrane. Involved in retromer assembly and cargo export, recognizing the cargo selection complex (CSC). GTP-bound YPT7 recruits CSC to vacuolar membranes via retromer subunit VPS35. Interacts with the HOPS complex subunit VPS39 independent of the HOPS complex at mitochondria-vacuole contact sites (vCLAMPs), providing a physical and metabolic interconnection between the endocytic pathway and mitochondria. This Saccharomyces cerevisiae (strain ATCC 204508 / S288c) (Baker's yeast) protein is Ypt/Rab-type GTPase YPT7 (YPT7).